Reading from the N-terminus, the 106-residue chain is Secreted RxLR effector protein 18 (106 aa).

The first 17 residues, 1-17 (MRGSTAMLLAAIALFSS), serve as a signal peptide directing secretion. The RxLR-dEER motif lies at 28–39 (RTLRSFEELEER).

This sequence belongs to the RxLR effector family.

The protein localises to the secreted. The protein resides in the host cell. Functionally, effector that may act as a suppressor of cell death to interrupt plant immunity. I. This is Secreted RxLR effector protein 18 from Plasmopara viticola (Downy mildew of grapevine).